The following is a 116-amino-acid chain: NAD(P)H-quinone oxidoreductase subunit M (116 aa).

The protein belongs to the complex I NdhM subunit family. In terms of assembly, NDH-1 can be composed of about 15 different subunits; different subcomplexes with different compositions have been identified which probably have different functions.

Its subcellular location is the cellular thylakoid membrane. The catalysed reaction is a plastoquinone + NADH + (n+1) H(+)(in) = a plastoquinol + NAD(+) + n H(+)(out). It catalyses the reaction a plastoquinone + NADPH + (n+1) H(+)(in) = a plastoquinol + NADP(+) + n H(+)(out). In terms of biological role, NDH-1 shuttles electrons from an unknown electron donor, via FMN and iron-sulfur (Fe-S) centers, to quinones in the respiratory and/or the photosynthetic chain. The immediate electron acceptor for the enzyme in this species is believed to be plastoquinone. Couples the redox reaction to proton translocation, and thus conserves the redox energy in a proton gradient. Cyanobacterial NDH-1 also plays a role in inorganic carbon-concentration. The polypeptide is NAD(P)H-quinone oxidoreductase subunit M (Synechococcus sp. (strain RCC307)).